The sequence spans 475 residues: Sulfate adenylyltransferase subunit 1 (475 aa).

Residues 25–241 (KSLLRFLTCG…LENIEIQRVV (217 aa)) form the tr-type G domain. Residues 34–41 (GSVDDGKS) are G1. 34-41 (GSVDDGKS) lines the GTP pocket. The interval 92–96 (GITID) is G2. The G3 stretch occupies residues 113–116 (DTPG). Residues 113–117 (DTPGH) and 168–171 (NKMD) contribute to the GTP site. Positions 168 to 171 (NKMD) are G4. Positions 206-208 (SAL) are G5.

This sequence belongs to the TRAFAC class translation factor GTPase superfamily. Classic translation factor GTPase family. CysN/NodQ subfamily. As to quaternary structure, heterodimer composed of CysD, the smaller subunit, and CysN.

The enzyme catalyses sulfate + ATP + H(+) = adenosine 5'-phosphosulfate + diphosphate. Its pathway is sulfur metabolism; hydrogen sulfide biosynthesis; sulfite from sulfate: step 1/3. Its function is as follows. With CysD forms the ATP sulfurylase (ATPS) that catalyzes the adenylation of sulfate producing adenosine 5'-phosphosulfate (APS) and diphosphate, the first enzymatic step in sulfur assimilation pathway. APS synthesis involves the formation of a high-energy phosphoric-sulfuric acid anhydride bond driven by GTP hydrolysis by CysN coupled to ATP hydrolysis by CysD. This chain is Sulfate adenylyltransferase subunit 1, found in Cronobacter sakazakii (strain ATCC BAA-894) (Enterobacter sakazakii).